Reading from the N-terminus, the 148-residue chain is Ubiquitin-conjugating enzyme E2-17 kDa (148 aa).

Residues 1-147 (MASKRILKEL…ARSWTQKYAM (147 aa)) enclose the UBC core domain. Catalysis depends on Cys85, which acts as the Glycyl thioester intermediate.

Belongs to the ubiquitin-conjugating enzyme family.

The enzyme catalyses S-ubiquitinyl-[E1 ubiquitin-activating enzyme]-L-cysteine + [E2 ubiquitin-conjugating enzyme]-L-cysteine = [E1 ubiquitin-activating enzyme]-L-cysteine + S-ubiquitinyl-[E2 ubiquitin-conjugating enzyme]-L-cysteine.. It functions in the pathway protein modification; protein ubiquitination. Its function is as follows. Catalyzes the covalent attachment of ubiquitin to other proteins. Mediates the selective degradation of short-lived and abnormal proteins. This chain is Ubiquitin-conjugating enzyme E2-17 kDa, found in Solanum lycopersicum (Tomato).